The following is a 185-amino-acid chain: Mu-like prophage FluMu protein gp16 (185 aa).

It to phage Mu protein gp16.

This Haemophilus influenzae (strain ATCC 51907 / DSM 11121 / KW20 / Rd) protein is Mu-like prophage FluMu protein gp16.